Here is a 432-residue protein sequence, read N- to C-terminus: Teosinte glume architecture 1 (432 aa).

Disordered regions lie at residues 20 to 55 (HAAA…GAPA) and 68 to 102 (ECEP…QQQC). Positions 22 to 41 (AAAPSSGGHAANAAAAGTGT) are enriched in low complexity. An SBP-type zinc finger spans residues 102-179 (CPSCAVDGCR…DGHNRRRRKP (78 aa)). 8 residues coordinate Zn(2+): Cys105, Cys110, Cys127, His130, Cys146, Cys149, His153, and Cys165. Positions 409–420 (GGGSGGGEGSSD) are enriched in gly residues. The interval 409–432 (GGGSGGGEGSSDGGTSSSMPFSWQ) is disordered.

Monomer and homodimer. As to expression, strongly expressed in immature ears and weakly in husks. Found in the inflorescence meristem of the developing ear, in the spikelet pair primordia, the glume primordia, the cupule forming region and other floral organs. Not detected in other tissues.

Its function is as follows. SBP transcriptional regulator probably involved in the domestication of maize. Acts as a transcriptional repressor binding to a 5'-GTAC-3' motif. May repress the growth of lateral branches in length and numbers. The sequence is that of Teosinte glume architecture 1 from Zea mays (Maize).